A 97-amino-acid polypeptide reads, in one-letter code: Protein MxiI (97 aa).

It to S.typhimurium PrgJ.

Its function is as follows. Necessary for the secretion of IPA invasins. The sequence is that of Protein MxiI (mxiI) from Shigella flexneri.